A 281-amino-acid chain; its full sequence is 2-dehydro-3-deoxyphosphooctonate aldolase (281 aa).

This sequence belongs to the KdsA family.

The protein resides in the cytoplasm. It carries out the reaction D-arabinose 5-phosphate + phosphoenolpyruvate + H2O = 3-deoxy-alpha-D-manno-2-octulosonate-8-phosphate + phosphate. It participates in carbohydrate biosynthesis; 3-deoxy-D-manno-octulosonate biosynthesis; 3-deoxy-D-manno-octulosonate from D-ribulose 5-phosphate: step 2/3. The protein operates within bacterial outer membrane biogenesis; lipopolysaccharide biosynthesis. This Azotobacter vinelandii (strain DJ / ATCC BAA-1303) protein is 2-dehydro-3-deoxyphosphooctonate aldolase.